A 196-amino-acid chain; its full sequence is ATP-dependent Clp protease proteolytic subunit (196 aa).

Serine 96 acts as the Nucleophile in catalysis. Histidine 121 is an active-site residue.

Belongs to the peptidase S14 family. Fourteen ClpP subunits assemble into 2 heptameric rings which stack back to back to give a disk-like structure with a central cavity, resembling the structure of eukaryotic proteasomes.

It is found in the cytoplasm. It catalyses the reaction Hydrolysis of proteins to small peptides in the presence of ATP and magnesium. alpha-casein is the usual test substrate. In the absence of ATP, only oligopeptides shorter than five residues are hydrolyzed (such as succinyl-Leu-Tyr-|-NHMec, and Leu-Tyr-Leu-|-Tyr-Trp, in which cleavage of the -Tyr-|-Leu- and -Tyr-|-Trp bonds also occurs).. Functionally, cleaves peptides in various proteins in a process that requires ATP hydrolysis. Has a chymotrypsin-like activity. Plays a major role in the degradation of misfolded proteins. The sequence is that of ATP-dependent Clp protease proteolytic subunit from Streptococcus suis (strain 98HAH33).